Here is a 199-residue protein sequence, read N- to C-terminus: NAD(P)H dehydrogenase (quinone) (199 aa).

In terms of domain architecture, Flavodoxin-like spans 4-190; it reads MLVLYYSAYG…DGARFQGRRV (187 aa). FMN contacts are provided by residues 10–15 and 78–80; these read SAYGHM and TRY. Y12 contacts NAD(+). W98 provides a ligand contact to substrate. FMN-binding positions include 113 to 119 and H134; that span reads STATQYG. The segment at 162 to 181 is disordered; it reads GMTTTADGDGSRQPSAQELD. Polar residues predominate over residues 163 to 177; sequence MTTTADGDGSRQPSA.

It belongs to the WrbA family. It depends on FMN as a cofactor.

It carries out the reaction a quinone + NADH + H(+) = a quinol + NAD(+). The catalysed reaction is a quinone + NADPH + H(+) = a quinol + NADP(+). In Brucella suis (strain ATCC 23445 / NCTC 10510), this protein is NAD(P)H dehydrogenase (quinone).